A 505-amino-acid chain; its full sequence is Folate transporter 1 (505 aa).

Transmembrane regions (helical) follow at residues 58–78, 89–109, 122–142, and 146–166; these read SLIA…IYLL, LSIV…WAVI, YYLL…GLIT, and LFIT…CNVI. Residues asparagine 177, asparagine 181, and asparagine 186 are each glycosylated (N-linked (GlcNAc...) asparagine). The next 2 helical transmembrane spans lie at 192 to 212 and 216 to 236; these read AFRK…LLLI and HIFL…FFII. The N-linked (GlcNAc...) asparagine glycan is linked to asparagine 240. Helical transmembrane passes span 266–286, 300–320, 326–346, 352–372, and 405–425; these read IIFI…FFYI, MAMF…LFFT, KLLL…LVVI, FLFI…EFIA, and FASI…NITS. A glycan (N-linked (GlcNAc...) asparagine) is linked at asparagine 427. Residues 431-451 form a helical membrane-spanning segment; it reads LPYMIIICCLTNIIPIFFLYI. N-linked (GlcNAc...) asparagine glycosylation is present at asparagine 454.

Belongs to the major facilitator superfamily. Folate-biopterin transporter (TC 2.A.71) family.

It localises to the cell membrane. It carries out the reaction folate(in) + H(+)(in) = folate(out) + H(+)(out). Its activity is regulated as follows. Transport of folates is inhibited by probenecid and methotrexate. Folate transporter with broad substrate specificity. Transports folic acid, folinic acid, pteroic acid, dihydropteroic acid, the folate precursor p-amino benzoic acid (pABA) and the human folate catabolite pABA monoglutamate. The polypeptide is Folate transporter 1 (Plasmodium falciparum (isolate 3D7)).